The primary structure comprises 450 residues: NADH-quinone oxidoreductase subunit H (450 aa).

Transmembrane regions (helical) follow at residues 18–38 (WWLVLGKALAIFVFLVLTPLL), 91–111 (ILAPVIAAVPAFMAFAVIPFG), 128–148 (LPVAVLYVLAATSIGVYGIVL), 169–189 (VISYEIAMALSFAAVFLDAGT), 201–221 (HTWYVFLLLPSFLIYVTSMVG), 262–282 (VTVSALATTLFLGGWHAPFPL), 292–312 (WWPVLWFTLKVWGFLFVFVWL), 324–344 (FMGLGWKILIPISLVWVMIVA), and 358–378 (SIALVVAGLVVALVVVVLLWK). Residues 387-450 (APEKPVEPRG…TGPTQENSDD (64 aa)) form a disordered region. A compositionally biased stretch (basic and acidic residues) spans 390–400 (KPVEPRGRAEL). The segment covering 433-450 (VSVTGAHSTGPTQENSDD) has biased composition (polar residues).

The protein belongs to the complex I subunit 1 family. As to quaternary structure, NDH-1 is composed of 14 different subunits. Subunits NuoA, H, J, K, L, M, N constitute the membrane sector of the complex.

The protein localises to the cell membrane. The enzyme catalyses a quinone + NADH + 5 H(+)(in) = a quinol + NAD(+) + 4 H(+)(out). In terms of biological role, NDH-1 shuttles electrons from NADH, via FMN and iron-sulfur (Fe-S) centers, to quinones in the respiratory chain. The immediate electron acceptor for the enzyme in this species is believed to be ubiquinone. Couples the redox reaction to proton translocation (for every two electrons transferred, four hydrogen ions are translocated across the cytoplasmic membrane), and thus conserves the redox energy in a proton gradient. This subunit may bind ubiquinone. This Rhodococcus jostii (strain RHA1) protein is NADH-quinone oxidoreductase subunit H.